The sequence spans 679 residues: DNA-directed RNA polymerase subunit beta' (679 aa).

Residues Cys-69, Cys-71, Cys-84, and Cys-87 each contribute to the Zn(2+) site. 3 residues coordinate Mg(2+): Asp-486, Asp-488, and Asp-490.

The protein belongs to the RNA polymerase beta' chain family. RpoC1 subfamily. In plastids the minimal PEP RNA polymerase catalytic core is composed of four subunits: alpha, beta, beta', and beta''. When a (nuclear-encoded) sigma factor is associated with the core the holoenzyme is formed, which can initiate transcription. The cofactor is Mg(2+). It depends on Zn(2+) as a cofactor.

Its subcellular location is the plastid. It is found in the chloroplast. The catalysed reaction is RNA(n) + a ribonucleoside 5'-triphosphate = RNA(n+1) + diphosphate. Its function is as follows. DNA-dependent RNA polymerase catalyzes the transcription of DNA into RNA using the four ribonucleoside triphosphates as substrates. This chain is DNA-directed RNA polymerase subunit beta', found in Physcomitrium patens (Spreading-leaved earth moss).